We begin with the raw amino-acid sequence, 484 residues long: Arginine ADP-riboxanase OspC3 (484 aa).

NAD(+) contacts are provided by His143, Gln144, Ser145, Asn155, Lys157, Thr169, Asn172, and Thr173. The active site involves Glu326. ANK repeat units follow at residues 369-398, 413-444, and 451-480; these read MAHQ…FTKQ, NLYD…DVNK, and SGDT…ILGK.

Belongs to the OspC family. In terms of assembly, interacts with host calmodulin (CALM1, CALM2 and/or CALM3); specifically interacts with the apo form of calmodulin, preventing calcium-binding.

Its subcellular location is the secreted. The protein localises to the host cytoplasm. It carries out the reaction L-arginyl-[protein] + NAD(+) = ADP-riboxanated L-argininyl-[protein] + nicotinamide + NH4(+) + H(+). With respect to regulation, interaction with host calmodulin (CALM1, CALM2 and/or CALM3) is required to mediate arginine ADP-riboxanation of host caspases. In terms of biological role, ADP-riboxanase effector that inhibits host cell pyroptosis. Acts by mediating arginine ADP-riboxanation of host CASP4/CASP11, blocking CASP4/CASP11 autoprocessing. This prevents CASP4 activation and ability to recognize and cleave GSDMD, thereby inhibiting LPS-induced pyroptosis. ADP-riboxanation takes place in two steps: OspC3 first catalyzes ADP-ribosylation of target Arg, and then initiates a deamination to remove one N-omega group. Independently of its ADP-riboxanase activity, acts as an inhibitor of calcium signaling by inhibiting host calmodulin, preventing activation of the JAK-STAT signaling pathway in response to interferon-beta. Mechanistically, acts by binding to the apo form of calmodulin, preventing calcium-binding and ability to activate host CaMK2 (CAMKII), which is required to stimulate the JAK-STAT signaling pathway in response to interferon-beta. The sequence is that of Arginine ADP-riboxanase OspC3 from Shigella flexneri.